A 105-amino-acid polypeptide reads, in one-letter code: MVKIVGDLTEFRAELSNAGSKLIVVDFSATWCGPCKMIKPFFHSMVEKYPDVVFIEIDVDDAQDVASHCDVKCMPTFQFYKNNEKVHEFSGANKEKLEEAIKKYM.

The region spanning 2 to 105 (VKIVGDLTEF…KLEEAIKKYM (104 aa)) is the Thioredoxin domain. Active-site nucleophile residues include Cys32 and Cys35. An intrachain disulfide couples Cys32 to Cys35. Cys69 and Cys73 each carry S-nitrosocysteine.

The protein belongs to the thioredoxin family. Post-translationally, may be nitrosylated on several cysteine residues, depending on the oxidation state. Nitrosylated Cys-73 may serve as donor for nitrosylation of target proteins.

The protein resides in the nucleus. Its subcellular location is the cytoplasm. It localises to the secreted. In terms of biological role, participates in various redox reactions through the reversible oxidation of its active center dithiol to a disulfide and catalyzes dithiol-disulfide exchange reactions. Plays a role in the reversible S-nitrosylation of cysteine residues in target proteins, and thereby contributes to the response to intracellular nitric oxide. Nitrosylates the active site Cys of CASP3 in response to nitric oxide (NO), and thereby inhibits caspase-3 activity. Induces the FOS/JUN AP-1 DNA binding activity in ionizing radiation (IR) cells through its oxidation/reduction status and stimulates AP-1 transcriptional activity. In Ophiophagus hannah (King cobra), this protein is Thioredoxin (TXN).